We begin with the raw amino-acid sequence, 131 residues long: Holo-[acyl-carrier-protein] synthase (131 aa).

Asp-8 and Glu-63 together coordinate Mg(2+).

Belongs to the P-Pant transferase superfamily. AcpS family. The cofactor is Mg(2+).

Its subcellular location is the cytoplasm. The enzyme catalyses apo-[ACP] + CoA = holo-[ACP] + adenosine 3',5'-bisphosphate + H(+). Functionally, transfers the 4'-phosphopantetheine moiety from coenzyme A to a Ser of acyl-carrier-protein. This Shewanella piezotolerans (strain WP3 / JCM 13877) protein is Holo-[acyl-carrier-protein] synthase.